Consider the following 480-residue polypeptide: Protein nucleotidyltransferase YdiU (480 aa).

ATP is bound by residues glycine 87, glycine 89, arginine 90, lysine 110, aspartate 122, glycine 123, arginine 173, and arginine 180. Aspartate 249 acts as the Proton acceptor in catalysis. Mg(2+)-binding residues include asparagine 250 and aspartate 259. Aspartate 259 lines the ATP pocket.

Belongs to the SELO family. Mg(2+) serves as cofactor. Mn(2+) is required as a cofactor.

It catalyses the reaction L-seryl-[protein] + ATP = 3-O-(5'-adenylyl)-L-seryl-[protein] + diphosphate. The catalysed reaction is L-threonyl-[protein] + ATP = 3-O-(5'-adenylyl)-L-threonyl-[protein] + diphosphate. It carries out the reaction L-tyrosyl-[protein] + ATP = O-(5'-adenylyl)-L-tyrosyl-[protein] + diphosphate. The enzyme catalyses L-histidyl-[protein] + UTP = N(tele)-(5'-uridylyl)-L-histidyl-[protein] + diphosphate. It catalyses the reaction L-seryl-[protein] + UTP = O-(5'-uridylyl)-L-seryl-[protein] + diphosphate. The catalysed reaction is L-tyrosyl-[protein] + UTP = O-(5'-uridylyl)-L-tyrosyl-[protein] + diphosphate. Nucleotidyltransferase involved in the post-translational modification of proteins. It can catalyze the addition of adenosine monophosphate (AMP) or uridine monophosphate (UMP) to a protein, resulting in modifications known as AMPylation and UMPylation. This Anoxybacillus flavithermus (strain DSM 21510 / WK1) protein is Protein nucleotidyltransferase YdiU.